The following is a 185-amino-acid chain: Large ribosomal subunit protein bL25 (185 aa).

The protein belongs to the bacterial ribosomal protein bL25 family. CTC subfamily. Part of the 50S ribosomal subunit; part of the 5S rRNA/L5/L18/L25 subcomplex. Contacts the 5S rRNA. Binds to the 5S rRNA independently of L5 and L18.

This is one of the proteins that binds to the 5S RNA in the ribosome where it forms part of the central protuberance. This Chlamydia trachomatis serovar D (strain ATCC VR-885 / DSM 19411 / UW-3/Cx) protein is Large ribosomal subunit protein bL25.